The sequence spans 442 residues: Exodeoxyribonuclease 7 large subunit (442 aa).

This sequence belongs to the XseA family. Heterooligomer composed of large and small subunits.

The protein resides in the cytoplasm. The catalysed reaction is Exonucleolytic cleavage in either 5'- to 3'- or 3'- to 5'-direction to yield nucleoside 5'-phosphates.. Its function is as follows. Bidirectionally degrades single-stranded DNA into large acid-insoluble oligonucleotides, which are then degraded further into small acid-soluble oligonucleotides. The sequence is that of Exodeoxyribonuclease 7 large subunit from Shewanella sediminis (strain HAW-EB3).